We begin with the raw amino-acid sequence, 217 residues long: ATP phosphoribosyltransferase (217 aa).

It belongs to the ATP phosphoribosyltransferase family. Short subfamily. As to quaternary structure, heteromultimer composed of HisG and HisZ subunits.

The protein localises to the cytoplasm. The catalysed reaction is 1-(5-phospho-beta-D-ribosyl)-ATP + diphosphate = 5-phospho-alpha-D-ribose 1-diphosphate + ATP. Its pathway is amino-acid biosynthesis; L-histidine biosynthesis; L-histidine from 5-phospho-alpha-D-ribose 1-diphosphate: step 1/9. In terms of biological role, catalyzes the condensation of ATP and 5-phosphoribose 1-diphosphate to form N'-(5'-phosphoribosyl)-ATP (PR-ATP). Has a crucial role in the pathway because the rate of histidine biosynthesis seems to be controlled primarily by regulation of HisG enzymatic activity. In Neisseria meningitidis serogroup A / serotype 4A (strain DSM 15465 / Z2491), this protein is ATP phosphoribosyltransferase (hisG).